The primary structure comprises 280 residues: Transmembrane protein 119 (280 aa).

An N-terminal signal peptide occupies residues 1–20; the sequence is MVPWFLLSLLLLARPVPGVA. Residues 21-91 are Extracellular-facing; that stretch reads YSVSLPASFL…IMDFFRQYVM (71 aa). A glycan (O-linked (Xyl...) (chondroitin sulfate) serine) is linked at Ser-36. The segment covering 38–47 has biased composition (low complexity); sequence EAEGSSASSP. The interval 38 to 73 is disordered; sequence EAEGSSASSPSLPPPGTPAFSPTPERPQPTALDGPV. Residues 92–112 form a helical membrane-spanning segment; that stretch reads LIAVVGSLTFLIMFIVCAALI. Residues 113–280 lie on the Cytoplasmic side of the membrane; it reads TRQKHKATAY…CACNRVSPSV (168 aa). Disordered regions lie at residues 133-162 and 181-280; these read VDQR…EGLD and PARA…SPSV. Residues 148 to 162 are compositionally biased toward basic and acidic residues; the sequence is VPDRAPDSRHEEGLD. Ser-269 carries the phosphoserine modification.

As to quaternary structure, interacts with SMAD1, SMAD5 and RUNX2. Expressed in spermatocytes and spermatids in the developing testis (at protein level). Expressed in the brain, heart, lung, spleen, skeletal muscle, ovary, testis and epididymis. Predominantly expressed in osteoblasts.

It is found in the cell membrane. Its subcellular location is the cytoplasm. The protein resides in the endoplasmic reticulum membrane. The protein localises to the secreted. Functionally, plays an important role in bone formation and normal bone mineralization. Promotes the differentiation of myoblasts into osteoblasts. May induce the commitment and differentiation of myoblasts into osteoblasts through an enhancement of BMP2 production and interaction with the BMP-RUNX2 pathway. Up-regulates the expression of ATF4 which plays a central role in osteoblast differentiation. Essential for normal spermatogenesis and late testicular differentiation. This chain is Transmembrane protein 119 (Tmem119), found in Mus musculus (Mouse).